Reading from the N-terminus, the 614-residue chain is V-type proton ATPase catalytic subunit A isoform 2 (614 aa).

Ser-142 carries the post-translational modification Phosphoserine. 247–254 (GAFGCGKT) lines the ATP pocket.

This sequence belongs to the ATPase alpha/beta chains family. As to quaternary structure, V-ATPase is a heteromultimeric enzyme made up of two complexes: the ATP-hydrolytic V1 complex and the proton translocation V0 complex. The V1 complex consists of three catalytic AB heterodimers that form a heterohexamer, three peripheral stalks each consisting of EG heterodimers, one central rotor including subunits D and F, and the regulatory subunits C and H. The proton translocation complex V0 consists of the proton transport subunit a, a ring of proteolipid subunits c9c'', rotary subunit d, subunits e and f, and the accessory subunits VhaAC45 and ATP6AP2.

The enzyme catalyses ATP + H2O + 4 H(+)(in) = ADP + phosphate + 5 H(+)(out). ATP hydrolysis occurs at the interface between the nucleotide-binding domains of subunits A and B. ATP hydrolysis triggers a conformational change in the subunits D and F, which induces a shift of subunit d. The c-ring is subsequently rotated and results in a continuous proton translocation across the membrane. In terms of biological role, catalytic subunit of the V1 complex of vacuolar(H+)-ATPase (V-ATPase), a multisubunit enzyme composed of a peripheral complex (V1) that hydrolyzes ATP and a membrane integral complex (V0) that translocates protons. V-ATPase is responsible for acidifying and maintaining the pH of intracellular compartments and in some cell types, is targeted to the plasma membrane, where it is responsible for acidifying the extracellular environment. The sequence is that of V-type proton ATPase catalytic subunit A isoform 2 (Vha68-2) from Drosophila melanogaster (Fruit fly).